The sequence spans 243 residues: Transmembrane protein 174 (243 aa).

2 helical membrane passes run Leu40–Ile60 and Leu73–Phe93.

Interacts with SLC34A1; regulates SLC34A1 internalization by PTH and FGF23.

Its subcellular location is the endoplasmic reticulum membrane. The protein localises to the apical cell membrane. Regulator of plasma phosphate homeostasis. Decreases serum inorganic phosphate (Pi) uptake by regulating the sodium-phosphate cotransporter SLC34A1 trafficking by PTH and FGF23 in the kidney. The chain is Transmembrane protein 174 (TMEM174) from Pongo abelii (Sumatran orangutan).